The sequence spans 513 residues: ATP synthase subunit alpha (513 aa).

169-176 serves as a coordination point for ATP; sequence GDRQTGKT.

This sequence belongs to the ATPase alpha/beta chains family. F-type ATPases have 2 components, CF(1) - the catalytic core - and CF(0) - the membrane proton channel. CF(1) has five subunits: alpha(3), beta(3), gamma(1), delta(1), epsilon(1). CF(0) has three main subunits: a(1), b(2) and c(9-12). The alpha and beta chains form an alternating ring which encloses part of the gamma chain. CF(1) is attached to CF(0) by a central stalk formed by the gamma and epsilon chains, while a peripheral stalk is formed by the delta and b chains.

Its subcellular location is the cell inner membrane. The catalysed reaction is ATP + H2O + 4 H(+)(in) = ADP + phosphate + 5 H(+)(out). Functionally, produces ATP from ADP in the presence of a proton gradient across the membrane. The alpha chain is a regulatory subunit. The chain is ATP synthase subunit alpha from Cronobacter sakazakii (strain ATCC BAA-894) (Enterobacter sakazakii).